A 457-amino-acid polypeptide reads, in one-letter code: Argininosuccinate lyase (457 aa).

The protein belongs to the lyase 1 family. Argininosuccinate lyase subfamily.

Its subcellular location is the cytoplasm. It catalyses the reaction 2-(N(omega)-L-arginino)succinate = fumarate + L-arginine. It participates in amino-acid biosynthesis; L-arginine biosynthesis; L-arginine from L-ornithine and carbamoyl phosphate: step 3/3. This is Argininosuccinate lyase from Yersinia pseudotuberculosis serotype IB (strain PB1/+).